The sequence spans 76 residues: Alpha/kappa-conotoxin-like pl14.3 (76 aa).

Residues 1 to 27 (MPSVRSVACCCLLWMMLSVQLVTPGSP) form the signal peptide. A propeptide spanning residues 28 to 39 (ATAQLSGQRTAR) is cleaved from the precursor. 2 cysteine pairs are disulfide-bonded: Cys-46/Cys-61 and Cys-50/Cys-63. Asp-64 is subject to Aspartic acid 1-amide. Positions 65–76 (GKRDVVSSSMAV) are excised as a propeptide.

Belongs to the conotoxin J superfamily. As to expression, expressed by the venom duct.

It localises to the secreted. Functionally, highly inhibits both nicotinic acetylcholine receptors (neuronal (alpha-3/beta-4) and muscular (alpha-1/beta-1/epsilon/delta) subtypes) and the voltage-gated potassium channel Kv1.6/KCNA6 subtype. This Conus planorbis (Planorbis cone) protein is Alpha/kappa-conotoxin-like pl14.3.